A 683-amino-acid polypeptide reads, in one-letter code: Elongation factor G-like protein (683 aa).

A tr-type G domain is found at 5 to 267 (QNVRSAALIG…YLGDIGVSPE (263 aa)). GTP contacts are provided by residues 14-21 (GHNGSGKS), 73-77 (DTPGF), and 127-130 (NQMD).

Belongs to the TRAFAC class translation factor GTPase superfamily. Classic translation factor GTPase family. EF-G/EF-2 subfamily.

In Thermotoga maritima (strain ATCC 43589 / DSM 3109 / JCM 10099 / NBRC 100826 / MSB8), this protein is Elongation factor G-like protein.